The primary structure comprises 175 residues: Anterior gradient protein 2 homolog (175 aa).

The first 20 residues, 1 to 20 (MEKISVSAFLLLVALSYTLA), serve as a signal peptide directing secretion. The segment at 21-40 (RDTTVKPAAKKDTKDSRPKL) is required to promote cell adhesion. Short sequence motifs (homodimer stabilization; interchain) lie at residues 45 to 54 (SRGWGDQLIW) and 60 to 67 (EALYKSKT).

This sequence belongs to the AGR family. In terms of assembly, monomer and homodimer. Interacts with LYPD3 and DAG1 (alphaDAG1). Interacts with MUC2; disulfide-linked.

Its subcellular location is the secreted. It localises to the endoplasmic reticulum. Required for MUC2 post-transcriptional synthesis and secretion. May play a role in the production of mucus by intestinal cells. Proto-oncogene that may play a role in cell migration, cell differentiation and cell growth. Promotes cell adhesion. The chain is Anterior gradient protein 2 homolog (AGR2) from Pongo abelii (Sumatran orangutan).